The primary structure comprises 137 residues: 5-hydroxyisourate hydrolase (137 aa).

An N-terminal signal peptide occupies residues 1-23 (MLKRYLVLSVVTAAFSLPSLVYA). Positions 32, 70, and 134 each coordinate substrate.

Belongs to the transthyretin family. 5-hydroxyisourate hydrolase subfamily. Homotetramer.

It is found in the periplasm. The catalysed reaction is 5-hydroxyisourate + H2O = 5-hydroxy-2-oxo-4-ureido-2,5-dihydro-1H-imidazole-5-carboxylate + H(+). In terms of biological role, catalyzes the hydrolysis of 5-hydroxyisourate (HIU) to 2-oxo-4-hydroxy-4-carboxy-5-ureidoimidazoline (OHCU). This chain is 5-hydroxyisourate hydrolase (hiuH), found in Escherichia coli O157:H7.